A 237-amino-acid chain; its full sequence is 2-C-methyl-D-erythritol 4-phosphate cytidylyltransferase (237 aa).

Belongs to the IspD/TarI cytidylyltransferase family. IspD subfamily.

It carries out the reaction 2-C-methyl-D-erythritol 4-phosphate + CTP + H(+) = 4-CDP-2-C-methyl-D-erythritol + diphosphate. It participates in isoprenoid biosynthesis; isopentenyl diphosphate biosynthesis via DXP pathway; isopentenyl diphosphate from 1-deoxy-D-xylulose 5-phosphate: step 2/6. Its function is as follows. Catalyzes the formation of 4-diphosphocytidyl-2-C-methyl-D-erythritol from CTP and 2-C-methyl-D-erythritol 4-phosphate (MEP). The sequence is that of 2-C-methyl-D-erythritol 4-phosphate cytidylyltransferase from Acidithiobacillus ferrooxidans (strain ATCC 23270 / DSM 14882 / CIP 104768 / NCIMB 8455) (Ferrobacillus ferrooxidans (strain ATCC 23270)).